The sequence spans 206 residues: MRRFALTVALPKGRMFREAYEVLKRAGLDLPEVEGERTLLHGKEGGVALLELRNKDVPIYVDLGIAEIGVVGKDVLLDSGRDLFEPVDLGFGACRLSLIRRPGDTGPIRRVATKYPNFTARLLKERGWAADVVELSGNIELAAVTGLADAVVDVVQTGATLRAAGLVEVEVLAHSTARLVVNRQALKLKRAVLKPLIQRLRELSGS.

Belongs to the ATP phosphoribosyltransferase family. Short subfamily. In terms of assembly, heteromultimer composed of HisG and HisZ subunits.

Its subcellular location is the cytoplasm. It carries out the reaction 1-(5-phospho-beta-D-ribosyl)-ATP + diphosphate = 5-phospho-alpha-D-ribose 1-diphosphate + ATP. Its pathway is amino-acid biosynthesis; L-histidine biosynthesis; L-histidine from 5-phospho-alpha-D-ribose 1-diphosphate: step 1/9. Catalyzes the condensation of ATP and 5-phosphoribose 1-diphosphate to form N'-(5'-phosphoribosyl)-ATP (PR-ATP). Has a crucial role in the pathway because the rate of histidine biosynthesis seems to be controlled primarily by regulation of HisG enzymatic activity. The chain is ATP phosphoribosyltransferase from Thermus thermophilus (strain ATCC 27634 / DSM 579 / HB8).